Reading from the N-terminus, the 175-residue chain is Nucleoside-triphosphatase THEP1 (175 aa).

Residues 15–22 and 106–113 contribute to the ATP site; these read GNPGVGKT and VLAIDEIG.

It belongs to the THEP1 NTPase family.

The enzyme catalyses a ribonucleoside 5'-triphosphate + H2O = a ribonucleoside 5'-diphosphate + phosphate + H(+). Functionally, has nucleotide phosphatase activity towards ATP, GTP, CTP, TTP and UTP. May hydrolyze nucleoside diphosphates with lower efficiency. The protein is Nucleoside-triphosphatase THEP1 of Saccharolobus solfataricus (strain ATCC 35092 / DSM 1617 / JCM 11322 / P2) (Sulfolobus solfataricus).